The primary structure comprises 303 residues: N-acetyl-D-glucosamine kinase (303 aa).

Residues 4-11 (GFDIGGTK) and 133-140 (GVGGGLIF) contribute to the ATP site. The Zn(2+) site is built by H157, C177, C179, and C184.

This sequence belongs to the ROK (NagC/XylR) family. NagK subfamily.

It carries out the reaction N-acetyl-D-glucosamine + ATP = N-acetyl-D-glucosamine 6-phosphate + ADP + H(+). The protein operates within cell wall biogenesis; peptidoglycan recycling. In terms of biological role, catalyzes the phosphorylation of N-acetyl-D-glucosamine (GlcNAc) derived from cell-wall degradation, yielding GlcNAc-6-P. The protein is N-acetyl-D-glucosamine kinase of Shigella sonnei (strain Ss046).